The following is a 409-amino-acid chain: Proteasome-activating nucleotidase (409 aa).

Residues 1–22 (MTLSSAGGSRSHRHNGGHSERD) form a disordered region. Residues 23–58 (VEIRILKDKVRSLTKEKISLQKELEYYKNEITKLLS) adopt a coiled-coil conformation. Residues 183–188 (GTGKTL) and H322 contribute to the ATP site.

Belongs to the AAA ATPase family. As to quaternary structure, homohexamer. The hexameric complex has a two-ring architecture resembling a top hat that caps the 20S proteasome core at one or both ends. Upon ATP-binding, the C-terminus of PAN interacts with the alpha-rings of the proteasome core by binding to the intersubunit pockets.

It is found in the cytoplasm. ATPase which is responsible for recognizing, binding, unfolding and translocation of substrate proteins into the archaeal 20S proteasome core particle. Is essential for opening the gate of the 20S proteasome via an interaction with its C-terminus, thereby allowing substrate entry and access to the site of proteolysis. Thus, the C-termini of the proteasomal ATPase function like a 'key in a lock' to induce gate opening and therefore regulate proteolysis. Unfolding activity requires energy from ATP hydrolysis, whereas ATP binding alone promotes ATPase-20S proteasome association which triggers gate opening, and supports translocation of unfolded substrates. This Aeropyrum pernix (strain ATCC 700893 / DSM 11879 / JCM 9820 / NBRC 100138 / K1) protein is Proteasome-activating nucleotidase.